The primary structure comprises 182 residues: uncharacterized protein (182 aa).

It belongs to the staphylococcal tandem lipoprotein family.

This is an uncharacterized protein from Staphylococcus haemolyticus (strain JCSC1435).